A 298-amino-acid chain; its full sequence is Bifunctional protein FolD (298 aa).

NADP(+) contacts are provided by residues 165–167 (GRS), S190, and I231.

The protein belongs to the tetrahydrofolate dehydrogenase/cyclohydrolase family. As to quaternary structure, homodimer.

It catalyses the reaction (6R)-5,10-methylene-5,6,7,8-tetrahydrofolate + NADP(+) = (6R)-5,10-methenyltetrahydrofolate + NADPH. The enzyme catalyses (6R)-5,10-methenyltetrahydrofolate + H2O = (6R)-10-formyltetrahydrofolate + H(+). Its pathway is one-carbon metabolism; tetrahydrofolate interconversion. Its function is as follows. Catalyzes the oxidation of 5,10-methylenetetrahydrofolate to 5,10-methenyltetrahydrofolate and then the hydrolysis of 5,10-methenyltetrahydrofolate to 10-formyltetrahydrofolate. The protein is Bifunctional protein FolD of Prochlorococcus marinus (strain MIT 9515).